Reading from the N-terminus, the 396-residue chain is Ribose-phosphate pyrophosphokinase 1, chloroplastic (396 aa).

The N-terminal 36 residues, 1–36, are a transit peptide targeting the chloroplast; it reads MPLSYSAAAAAAPSPLAARSRGLLRRPPRSSPVVVR. Positions 204, 206, 215, and 219 each coordinate Mg(2+). A binding of phosphoribosylpyrophosphate region spans residues 290–305; sequence GKVAVMMDDMIDTAGT.

This sequence belongs to the ribose-phosphate pyrophosphokinase family. It depends on Mg(2+) as a cofactor.

It is found in the plastid. The protein resides in the chloroplast. The catalysed reaction is D-ribose 5-phosphate + ATP = 5-phospho-alpha-D-ribose 1-diphosphate + AMP + H(+). The sequence is that of Ribose-phosphate pyrophosphokinase 1, chloroplastic from Oryza sativa subsp. japonica (Rice).